The primary structure comprises 519 residues: 3-octaprenyl-4-hydroxybenzoate carboxy-lyase (519 aa).

Mn(2+) is bound at residue N177. Prenylated FMN-binding positions include 180–182, 194–196, and 199–200; these read IYR, RWL, and RG. E243 serves as a coordination point for Mn(2+). The active-site Proton donor is D318.

The protein belongs to the UbiD family. Homohexamer. Prenylated FMN is required as a cofactor. Requires Mn(2+) as cofactor.

Its subcellular location is the cell membrane. It carries out the reaction a 4-hydroxy-3-(all-trans-polyprenyl)benzoate + H(+) = a 2-(all-trans-polyprenyl)phenol + CO2. The protein operates within cofactor biosynthesis; ubiquinone biosynthesis. In terms of biological role, catalyzes the decarboxylation of 3-octaprenyl-4-hydroxy benzoate to 2-octaprenylphenol, an intermediate step in ubiquinone biosynthesis. The polypeptide is 3-octaprenyl-4-hydroxybenzoate carboxy-lyase (Burkholderia pseudomallei (strain 1710b)).